The following is a 403-amino-acid chain: Protein-export membrane protein SecD (403 aa).

6 helical membrane-spanning segments follow: residues 14 to 34 (VILL…MGIQ), 238 to 258 (FAEG…VILI), 265 to 285 (ILVL…LGAA), 294 to 314 (LAAI…QIII), 336 to 356 (FFII…LAYI), and 365 to 385 (IGLL…GVFI).

Belongs to the SecD/SecF family. SecD subfamily. In terms of assembly, part of the protein translocation apparatus. Forms a complex with SecF.

Its subcellular location is the cell membrane. Its function is as follows. Involved in protein export. The polypeptide is Protein-export membrane protein SecD (Methanothermobacter thermautotrophicus (strain ATCC 29096 / DSM 1053 / JCM 10044 / NBRC 100330 / Delta H) (Methanobacterium thermoautotrophicum)).